A 399-amino-acid chain; its full sequence is uncharacterized protein (399 aa).

WD repeat units follow at residues 59–99, 102–141, 144–185, 187–227, 241–280, 283–322, 324–363, and 366–399; these read EHKD…QICQ, GHKDSIVAIDWSFDGTYIATGGMDSQVRLWKSSTGFEFIT, ETVD…QVMY, HTAP…PECR, ETAAGWTSFDCNAEGNVLFLGGSSGKVKVVNINSSHILAS, AQTESVEAIALCTALPICACASVDGTVALYDSASLKFRKS, PHEQAVIDCKFLPNTPYLLTACADCVIRKWDVRSGQLLGE, and GHQEPILCMAITPDGKRVVTGSDDTELLVFDCEH.

The protein resides in the cytoplasm. It localises to the nucleus. This is an uncharacterized protein from Schizosaccharomyces pombe (strain 972 / ATCC 24843) (Fission yeast).